Consider the following 208-residue polypeptide: CASP-like protein 1D1 (208 aa).

The tract at residues 1–36 is disordered; it reads MSSVDTEKPAPPPLETEAPPPPPPPPPPPPPPPPPP. Topologically, residues 1-41 are cytoplasmic; sequence MSSVDTEKPAPPPLETEAPPPPPPPPPPPPPPPPPPAGYSA. The segment covering 9 to 36 has biased composition (pro residues); that stretch reads PAPPPLETEAPPPPPPPPPPPPPPPPPP. Residues 42-62 traverse the membrane as a helical segment; the sequence is LDVVLRILLLGSAVASVVVMV. The Extracellular portion of the chain corresponds to 63–89; the sequence is TSVQTKLIAVAGVPVLVSNKAKFQNSP. A helical membrane pass occupies residues 90-110; sequence AFIYFVAALSVVGLYSIITTL. Residues 111 to 133 lie on the Cytoplasmic side of the membrane; it reads ASFIFISKPSCSTKTILHLAIWD. The helical transmembrane segment at 134 to 154 threads the bilayer; the sequence is VLMLGLAASATGTAGGVAYVG. Topologically, residues 155–180 are extracellular; that stretch reads LKGNSHVGWNKVCNTYDKFCRHVGGS. A helical transmembrane segment spans residues 181–201; the sequence is IAVALFASILLVLLVWLSLFT. Over 202-208 the chain is Cytoplasmic; sequence LYSRIRK.

Belongs to the Casparian strip membrane proteins (CASP) family. In terms of assembly, homodimer and heterodimers.

The protein localises to the cell membrane. This is CASP-like protein 1D1 from Vitis vinifera (Grape).